A 503-amino-acid chain; its full sequence is Aromatase (503 aa).

3 helical membrane passes run 19-39, 53-73, and 303-323; these read EVVP…LLVW, FLGI…IGSA, and MLIA…FLIA. Substrate is bound by residues Asp309 and Met374. Cys437 lines the heme pocket.

Belongs to the cytochrome P450 family. The cofactor is heme.

It localises to the endoplasmic reticulum membrane. The protein localises to the microsome membrane. The catalysed reaction is testosterone + 3 reduced [NADPH--hemoprotein reductase] + 3 O2 = 17beta-estradiol + formate + 3 oxidized [NADPH--hemoprotein reductase] + 4 H2O + 4 H(+). The enzyme catalyses androst-4-ene-3,17-dione + 3 reduced [NADPH--hemoprotein reductase] + 3 O2 = estrone + formate + 3 oxidized [NADPH--hemoprotein reductase] + 4 H2O + 4 H(+). It carries out the reaction androst-4-ene-3,17-dione + reduced [NADPH--hemoprotein reductase] + O2 = 19-hydroxyandrost-4-ene-3,17-dione + oxidized [NADPH--hemoprotein reductase] + H2O + H(+). It catalyses the reaction 19-hydroxyandrost-4-ene-3,17-dione + reduced [NADPH--hemoprotein reductase] + O2 = 19-oxo-androst-4-ene-3,17-dione + oxidized [NADPH--hemoprotein reductase] + 2 H2O + H(+). The catalysed reaction is 19-oxo-androst-4-ene-3,17-dione + reduced [NADPH--hemoprotein reductase] + O2 = estrone + formate + oxidized [NADPH--hemoprotein reductase] + H2O + 2 H(+). The enzyme catalyses estrone + reduced [NADPH--hemoprotein reductase] + O2 = 2-hydroxyestrone + oxidized [NADPH--hemoprotein reductase] + H2O + H(+). It carries out the reaction 17beta-hydroxy-5alpha-androstan-3-one + reduced [NADPH--hemoprotein reductase] + O2 = 17beta,19-dihydroxy-3-oxo-5alpha-androstanone + oxidized [NADPH--hemoprotein reductase] + H2O + H(+). It catalyses the reaction 17beta,19-dihydroxy-3-oxo-5alpha-androstanone + reduced [NADPH--hemoprotein reductase] + O2 = 17beta-hydroxy-3,19-dioxo-5alpha-androstanone + oxidized [NADPH--hemoprotein reductase] + 2 H2O + H(+). The catalysed reaction is 17beta-hydroxy-3,19-dioxo-5alpha-androstanone + reduced [NADPH--hemoprotein reductase] + O2 = 17beta-hydroxy-3-oxo-19-nor-5alpha-androst-1-ene + formate + oxidized [NADPH--hemoprotein reductase] + H2O + 2 H(+). It functions in the pathway steroid hormone biosynthesis. Functionally, a cytochrome P450 monooxygenase that catalyzes the conversion of C19 androgens, androst-4-ene-3,17-dione (androstenedione) and testosterone to the C18 estrogens, estrone and estradiol, respectively. Catalyzes three successive oxidations of C19 androgens: two conventional oxidations at C19 yielding 19-hydroxy and 19-oxo/19-aldehyde derivatives, followed by a third oxidative aromatization step that involves C1-beta hydrogen abstraction combined with cleavage of the C10-C19 bond to yield a phenolic A ring and formic acid. Alternatively, the third oxidative reaction yields a 19-norsteroid and formic acid. Converts dihydrotestosterone to delta1,10-dehydro 19-nordihydrotestosterone and may play a role in homeostasis of this potent androgen. Also displays 2-hydroxylase activity toward estrone. Mechanistically, uses molecular oxygen inserting one oxygen atom into a substrate, and reducing the second into a water molecule, with two electrons provided by NADPH via cytochrome P450 reductase (CPR; NADPH-ferrihemoprotein reductase). This chain is Aromatase (CYP19A1), found in Capra hircus (Goat).